Here is a 99-residue protein sequence, read N- to C-terminus: NADH-quinone oxidoreductase subunit K (99 aa).

The next 3 membrane-spanning stretches (helical) occupy residues 3–23 (PANY…GVLV), 28–48 (IVVF…LVTF), and 62–82 (FFVM…ILAI).

The protein belongs to the complex I subunit 4L family. NDH-1 is composed of 14 different subunits. Subunits NuoA, H, J, K, L, M, N constitute the membrane sector of the complex.

The protein resides in the cell membrane. It catalyses the reaction a quinone + NADH + 5 H(+)(in) = a quinol + NAD(+) + 4 H(+)(out). Its function is as follows. NDH-1 shuttles electrons from NADH, via FMN and iron-sulfur (Fe-S) centers, to quinones in the respiratory chain. The immediate electron acceptor for the enzyme in this species is believed to be a menaquinone. Couples the redox reaction to proton translocation (for every two electrons transferred, four hydrogen ions are translocated across the cytoplasmic membrane), and thus conserves the redox energy in a proton gradient. The sequence is that of NADH-quinone oxidoreductase subunit K from Parafrankia sp. (strain EAN1pec).